A 1004-amino-acid polypeptide reads, in one-letter code: Outer cell wall protein (1004 aa).

Residues 1 to 24 form the signal peptide; it reads MNKKVVLSVLSTTLVASVAASAFA.

The outer cell wall layer is composed of subunits of the outer cell wall protein. These proteins form a hexagonal array with a lattice constant of 14.5 nm in the outer cell wall layers.

Its subcellular location is the secreted. It is found in the cell wall. The protein localises to the S-layer. The outer wall protein binds to the middle cell wall protein. The chain is Outer cell wall protein from Brevibacillus brevis (strain 47 / JCM 6285 / NBRC 100599).